The sequence spans 220 residues: Ribonuclease HII (220 aa).

The 194-residue stretch at 27–220 folds into the RNase H type-2 domain; that stretch reads CIIVGVDEVG…SKISYMFKNS (194 aa). Asp-33, Glu-34, and Asp-128 together coordinate a divalent metal cation.

This sequence belongs to the RNase HII family. Mn(2+) serves as cofactor. Requires Mg(2+) as cofactor.

It localises to the cytoplasm. The enzyme catalyses Endonucleolytic cleavage to 5'-phosphomonoester.. In terms of biological role, endonuclease that specifically degrades the RNA of RNA-DNA hybrids. The sequence is that of Ribonuclease HII from Ehrlichia ruminantium (strain Gardel).